Consider the following 64-residue polypeptide: SPbeta prophage-derived uncharacterized protein YoqI (64 aa).

This chain is SPbeta prophage-derived uncharacterized protein YoqI (yoqI), found in Bacillus subtilis (strain 168).